The sequence spans 361 residues: Flagellar P-ring protein (361 aa).

Residues 1 to 18 (MRKFTILLMLLLASSAQA) form the signal peptide.

This sequence belongs to the FlgI family. As to quaternary structure, the basal body constitutes a major portion of the flagellar organelle and consists of four rings (L,P,S, and M) mounted on a central rod.

It localises to the periplasm. The protein resides in the bacterial flagellum basal body. In terms of biological role, assembles around the rod to form the L-ring and probably protects the motor/basal body from shearing forces during rotation. The protein is Flagellar P-ring protein of Vibrio cholerae serotype O1 (strain ATCC 39541 / Classical Ogawa 395 / O395).